A 122-amino-acid chain; its full sequence is Large ribosomal subunit protein bL12 (122 aa).

Belongs to the bacterial ribosomal protein bL12 family. As to quaternary structure, homodimer. Part of the ribosomal stalk of the 50S ribosomal subunit. Forms a multimeric L10(L12)X complex, where L10 forms an elongated spine to which 2 to 4 L12 dimers bind in a sequential fashion. Binds GTP-bound translation factors.

In terms of biological role, forms part of the ribosomal stalk which helps the ribosome interact with GTP-bound translation factors. Is thus essential for accurate translation. The protein is Large ribosomal subunit protein bL12 of Myxococcus xanthus (strain DK1622).